Reading from the N-terminus, the 156-residue chain is Zinc metalloproteinase-disintegrin jararin (156 aa).

Residues 1–67 (FVANRMAHEL…NYYGCLLNEP (67 aa)) form the Peptidase M12B domain. H8 provides a ligand contact to Zn(2+). E9 is a catalytic residue. H12 contacts Zn(2+). Intrachain disulfides connect C23–C47, C25–C30, C78–C97, C89–C107, C91–C102, C101–C124, C115–C121, C120–C145, and C133–C152. In terms of domain architecture, Disintegrin spans 75 to 156 (PPFCGNYYPE…GQSGDCPRNS (82 aa)). Residues 136 to 145 (GRGDNPDDRC) are compositionally biased toward basic and acidic residues. The segment at 136–156 (GRGDNPDDRCTGQSGDCPRNS) is disordered. The short motif at 137–139 (RGD) is the Cell attachment site element. The span at 146–156 (TGQSGDCPRNS) shows a compositional bias: polar residues.

It belongs to the venom metalloproteinase (M12B) family. P-II subfamily. P-IIb sub-subfamily. Monomer. The cofactor is Zn(2+). In terms of tissue distribution, expressed by the venom gland.

The protein resides in the secreted. Functionally, snake venom zinc metalloproteinase that inhibits ADP-induced platelet aggregation (probably by binding integrin alpha-IIb/beta-3 (ITGA2B/ITGB3)) and degrades fibrinogen. This chain is Zinc metalloproteinase-disintegrin jararin, found in Bothrops jararaca (Jararaca).